The sequence spans 354 residues: Putative Xaa-Pro aminopeptidase (354 aa).

Mn(2+) is bound by residues D213, D224, H290, E319, and E333.

Belongs to the peptidase M24B family. The cofactor is Mn(2+).

It catalyses the reaction Release of any N-terminal amino acid, including proline, that is linked to proline, even from a dipeptide or tripeptide.. This chain is Putative Xaa-Pro aminopeptidase (pepP), found in Mycoplasma genitalium (strain ATCC 33530 / DSM 19775 / NCTC 10195 / G37) (Mycoplasmoides genitalium).